A 429-amino-acid chain; its full sequence is Adenylosuccinate synthetase (429 aa).

Residues 12–18 and 40–42 each bind GTP; these read GDEGKGK and GHT. The Proton acceptor role is filled by aspartate 13. Mg(2+) is bound by residues aspartate 13 and glycine 40. IMP-binding positions include 13–16, 38–41, threonine 128, arginine 142, glutamine 223, threonine 238, and arginine 302; these read DEGK and NAGH. The active-site Proton donor is histidine 41. 298 to 304 lines the substrate pocket; the sequence is VNTGRPR. GTP contacts are provided by residues arginine 304, 330–332, and 412–414; these read KLD and GVG.

It belongs to the adenylosuccinate synthetase family. As to quaternary structure, homodimer. Mg(2+) serves as cofactor.

The protein localises to the cytoplasm. The catalysed reaction is IMP + L-aspartate + GTP = N(6)-(1,2-dicarboxyethyl)-AMP + GDP + phosphate + 2 H(+). Its pathway is purine metabolism; AMP biosynthesis via de novo pathway; AMP from IMP: step 1/2. In terms of biological role, plays an important role in the de novo pathway of purine nucleotide biosynthesis. Catalyzes the first committed step in the biosynthesis of AMP from IMP. The polypeptide is Adenylosuccinate synthetase (Paenarthrobacter aurescens (strain TC1)).